We begin with the raw amino-acid sequence, 825 residues long: Zinc finger protein 229 (825 aa).

The disordered stretch occupies residues 1 to 26 (METLTSRHEKRALHSQASAISQDREE). Residues 34–108 (LSFKDVAVVF…SHKELSSCKI (75 aa)) form the KRAB domain. A C2H2-type 1; degenerate zinc finger spans residues 291 to 315 (KLCQYDEFSEGLRHSAHLNRHQRVP). 7 C2H2-type zinc fingers span residues 349–371 (YRCDVCGKGFRYKSVLLIHQGVH), 377–399 (YKCEECGKAFGRSSNLLVHQRVH), 405–427 (YKCSECGKGFSYSSVLQVHQRLH), 433–455 (YTCSECGKGFCAKSALHKHQHIH), 461–483 (YSCGECGKGFSCSSHLSSHQKTH), 489–511 (YQCDKCGKGFSHNSYLQAHQRVH), and 517–539 (YKCNVCGKSFSYSSGLLMHQRLH). Lysine 543 participates in a covalent cross-link: Glycyl lysine isopeptide (Lys-Gly) (interchain with G-Cter in SUMO2). C2H2-type zinc fingers lie at residues 545–566 (YKCECGKSFGRSSDLHIHQRVH), 572–594 (YKCSECGKGFRRNSDLHSHQRVH), 600–622 (YVCDVCGKGFIYSSDLLIHQRVH), 628–650 (YKCAECGKGFSYSSGLLIHQRVH), 656–678 (YRCQECGKGFRCTSSLHKHQRVH), 684–706 (YTCDQCGKGFSYGSNLRTHQRLH), 712–734 (YTCCECGKGFRYGSGLLSHKRVH), 740–762 (YRCHVCGKGYSQSSHLQGHQRVH), 768–790 (YKCEECGKGFGRNSCLHVHQRVH), and 796–818 (YTCGVCGKGFSYTSGLRNHQRVH).

It belongs to the krueppel C2H2-type zinc-finger protein family.

It is found in the nucleus. May be involved in transcriptional regulation. The chain is Zinc finger protein 229 from Homo sapiens (Human).